We begin with the raw amino-acid sequence, 482 residues long: tRNA sulfurtransferase (482 aa).

The THUMP domain occupies 61–165; sequence PVIADALTRI…NDKLMLVKAR (105 aa). ATP is bound by residues 183–184, lysine 265, glycine 287, and glutamine 296; that span reads LI. Cysteine 344 and cysteine 456 form a disulfide bridge. The 79-residue stretch at 404 to 482 folds into the Rhodanese domain; that stretch reads FDADQVILDI…GFTNVKVYRP (79 aa). The Cysteine persulfide intermediate role is filled by cysteine 456.

This sequence belongs to the ThiI family.

The protein resides in the cytoplasm. The catalysed reaction is [ThiI sulfur-carrier protein]-S-sulfanyl-L-cysteine + a uridine in tRNA + 2 reduced [2Fe-2S]-[ferredoxin] + ATP + H(+) = [ThiI sulfur-carrier protein]-L-cysteine + a 4-thiouridine in tRNA + 2 oxidized [2Fe-2S]-[ferredoxin] + AMP + diphosphate. The enzyme catalyses [ThiS sulfur-carrier protein]-C-terminal Gly-Gly-AMP + S-sulfanyl-L-cysteinyl-[cysteine desulfurase] + AH2 = [ThiS sulfur-carrier protein]-C-terminal-Gly-aminoethanethioate + L-cysteinyl-[cysteine desulfurase] + A + AMP + 2 H(+). The protein operates within cofactor biosynthesis; thiamine diphosphate biosynthesis. Catalyzes the ATP-dependent transfer of a sulfur to tRNA to produce 4-thiouridine in position 8 of tRNAs, which functions as a near-UV photosensor. Also catalyzes the transfer of sulfur to the sulfur carrier protein ThiS, forming ThiS-thiocarboxylate. This is a step in the synthesis of thiazole, in the thiamine biosynthesis pathway. The sulfur is donated as persulfide by IscS. This is tRNA sulfurtransferase from Serratia proteamaculans (strain 568).